The sequence spans 286 residues: 4-hydroxy-3-methylbut-2-enyl diphosphate reductase (286 aa).

Cys-12 serves as a coordination point for [4Fe-4S] cluster. 2 residues coordinate (2E)-4-hydroxy-3-methylbut-2-enyl diphosphate: His-46 and His-79. The dimethylallyl diphosphate site is built by His-46 and His-79. Residues His-46 and His-79 each contribute to the isopentenyl diphosphate site. Position 101 (Cys-101) interacts with [4Fe-4S] cluster. Position 129 (His-129) interacts with (2E)-4-hydroxy-3-methylbut-2-enyl diphosphate. His-129 contributes to the dimethylallyl diphosphate binding site. His-129 serves as a coordination point for isopentenyl diphosphate. Glu-131 functions as the Proton donor in the catalytic mechanism. (2E)-4-hydroxy-3-methylbut-2-enyl diphosphate is bound at residue Thr-169. Residue Cys-198 coordinates [4Fe-4S] cluster. Residues Ser-226, Asn-228, and Ser-270 each coordinate (2E)-4-hydroxy-3-methylbut-2-enyl diphosphate. Dimethylallyl diphosphate-binding residues include Ser-226, Asn-228, and Ser-270. Residues Ser-226, Asn-228, and Ser-270 each contribute to the isopentenyl diphosphate site.

It belongs to the IspH family. [4Fe-4S] cluster is required as a cofactor.

The catalysed reaction is isopentenyl diphosphate + 2 oxidized [2Fe-2S]-[ferredoxin] + H2O = (2E)-4-hydroxy-3-methylbut-2-enyl diphosphate + 2 reduced [2Fe-2S]-[ferredoxin] + 2 H(+). It catalyses the reaction dimethylallyl diphosphate + 2 oxidized [2Fe-2S]-[ferredoxin] + H2O = (2E)-4-hydroxy-3-methylbut-2-enyl diphosphate + 2 reduced [2Fe-2S]-[ferredoxin] + 2 H(+). It functions in the pathway isoprenoid biosynthesis; dimethylallyl diphosphate biosynthesis; dimethylallyl diphosphate from (2E)-4-hydroxy-3-methylbutenyl diphosphate: step 1/1. Its pathway is isoprenoid biosynthesis; isopentenyl diphosphate biosynthesis via DXP pathway; isopentenyl diphosphate from 1-deoxy-D-xylulose 5-phosphate: step 6/6. Catalyzes the conversion of 1-hydroxy-2-methyl-2-(E)-butenyl 4-diphosphate (HMBPP) into a mixture of isopentenyl diphosphate (IPP) and dimethylallyl diphosphate (DMAPP). Acts in the terminal step of the DOXP/MEP pathway for isoprenoid precursor biosynthesis. The sequence is that of 4-hydroxy-3-methylbut-2-enyl diphosphate reductase from Solidesulfovibrio magneticus (strain ATCC 700980 / DSM 13731 / RS-1) (Desulfovibrio magneticus).